We begin with the raw amino-acid sequence, 510 residues long: MIIVTFFWVGIVLSAIWTFYKVVLYPYRVSPLRTLPQSQRGHWLWNHAFSEFLQPIGQLHAELLLQIPNDGMICLRGLFGAPKIFLTSPKSLADVLVHRADDFEKLPGERKILRAVVGDGLVTAEGDVHYQQKRKLLAGFTPPKIRALYPVFWKEATALTQQIRRTLTHDGSGIYTGTTDMVYWAPRVSMDMIGAAGFGQSFHSLRDADSEIIHCYEKAFAIGAGHLLCVFADTLLPRIILQWLPWPRWRQFRQNIDSIRDFCHQWVTDAKATTALGDGIPNNLLANMIHTGEYTFQELIEQVRTFLAAGHENTSSVVMWVMLALASDSQLQSRLRQELQANLPEVELDEVDLAILEQLPLLNAVVSEAIRLFPPLPIGNRIAIRDTTVMNHPIPKGTPFLIVPRAINRSSELWGPDADRFNADRWINPDTGRFNNHGGASSNYSFLSFFHGPHNCIGQNFARAELRTVVAAVIRSFDMVLDNPAADVSPVGWFTPRPADGVKVKLRSLV.

Residues 2–22 (IIVTFFWVGIVLSAIWTFYKV) form a helical membrane-spanning segment. Asn313, Asn408, and Asn443 each carry an N-linked (GlcNAc...) asparagine glycan. Position 456 (Cys456) interacts with heme.

The protein belongs to the cytochrome P450 family. Heme serves as cofactor.

The protein resides in the membrane. The protein operates within secondary metabolite biosynthesis. In terms of biological role, cytochrome P450 monooxygenase; part of the gene cluster that mediates the biosynthesis of the indole diterpenes penitrems. The geranylgeranyl diphosphate (GGPP) synthase ptmG catalyzes the first step in penitrem biosynthesis via conversion of farnesyl pyrophosphate and isopentyl pyrophosphate into geranylgeranyl pyrophosphate (GGPP). Condensation of indole-3-glycerol phosphate with GGPP by the prenyl transferase ptmC then forms 3-geranylgeranylindole (3-GGI). Epoxidation by the FAD-dependent monooxygenase ptmM leads to a epoxidized-GGI that is substrate of the terpene cyclase ptmB for cyclization to yield paspaline. Paspaline is subsequently converted to 13-desoxypaxilline by the cytochrome P450 monooxygenase ptmP, the latter being then converted to paxilline by the cytochrome P450 monooxygenase ptmQ. Paxilline is converted to beta-paxitriol via C-10 ketoreduction by the short-chain dehydrogenase ptmH which can be monoprenylated at the C-20 by the indole diterpene prenyltransferase ptmD. A two-step elimination (acetylation and elimination) process performed by the O-acetyltransferase ptmV and ptmI leads to the production of the prenylated form of penijanthine. The FAD-linked oxidoreductase ptmO then converts the prenylated form of penijanthine into PC-M5 which is in turn transformed into PC-M4 by the aromatic dimethylallyltransferase ptmE. Five sequential oxidative transformations performed by the cytochrome P450 monooxygenases ptmK, ptmU, ptmL, ptmN and ptmJ yield the various penitrem compounds. PtmK, ptmU and ptmM are involved in the formation of the key bicyclic ring of penitrem C via the formation of the intermediates secopenitrem D and penitrem D. PtmL catalyzes the epoxidation of penitrem D and C to yield penitrem B and F, respectively. PtmJ catalyzes the last benzylic hydroxylation to convert penitrem B to prenitrem E and penitrem F to penitrem A. In Penicillium ochrochloron, this protein is Cytochrome P450 monooxygenase ptmK.